The primary structure comprises 211 residues: Pyridoxine/pyridoxamine 5'-phosphate oxidase (211 aa).

Substrate-binding positions include 7-10 and Lys65; that span reads RREY. Residues 60–65, 75–76, Arg81, Lys82, and Gln104 contribute to the FMN site; these read RIVLLK and YT. Tyr122, Arg126, and Ser130 together coordinate substrate. Residues 139–140 and Trp184 each bind FMN; that span reads QS. Substrate is bound at residue 190 to 192; the sequence is RLH. Arg194 is a binding site for FMN.

It belongs to the pyridoxamine 5'-phosphate oxidase family. In terms of assembly, homodimer. It depends on FMN as a cofactor.

It carries out the reaction pyridoxamine 5'-phosphate + O2 + H2O = pyridoxal 5'-phosphate + H2O2 + NH4(+). The catalysed reaction is pyridoxine 5'-phosphate + O2 = pyridoxal 5'-phosphate + H2O2. The protein operates within cofactor metabolism; pyridoxal 5'-phosphate salvage; pyridoxal 5'-phosphate from pyridoxamine 5'-phosphate: step 1/1. It functions in the pathway cofactor metabolism; pyridoxal 5'-phosphate salvage; pyridoxal 5'-phosphate from pyridoxine 5'-phosphate: step 1/1. Catalyzes the oxidation of either pyridoxine 5'-phosphate (PNP) or pyridoxamine 5'-phosphate (PMP) into pyridoxal 5'-phosphate (PLP). The sequence is that of Pyridoxine/pyridoxamine 5'-phosphate oxidase from Photobacterium profundum (strain SS9).